A 334-amino-acid chain; its full sequence is Glucosyltransferase 3 (334 aa).

UDP-binding positions include threonine 16, arginine 179, and 249–254 (SHKSAT).

It belongs to the Gtf3 glucosyltransferase family. Homotetramer; a dimer of dimers.

It functions in the pathway protein modification; protein glycosylation. In terms of biological role, required for polymorphic O-glycosylation of the serine-rich repeat protein in this bacteria. Catalyzes the second step in glycosylation by transferring glucose from UDP-glucose to the terminal GlcNAc moiety of the 3-O-(N-acetyl-alpha-D-glucosaminyl)-L-seryl-[protein] resulting from the first glycosylation step. Its function is as follows. Part of the accessory SecA2/SecY2 system specifically required to export GspB, a serine-rich repeat cell wall protein encoded upstream in the same operon. The sequence is that of Glucosyltransferase 3 from Streptococcus gordonii.